The chain runs to 253 residues: Peptidase inhibitor R3HDML (253 aa).

A signal peptide spans 1 to 23 (MPLLSSIVGLTGLLLWMGHTVGA). The propeptide occupies 24–56 (LRMPNTTLVQGRPKNTAVWPLSGLGVPRHRRKR). N-linked (GlcNAc...) asparagine glycans are attached at residues asparagine 28 and asparagine 120. Positions 67-207 (LDYHNHIRAS…QQAVYLVCNY (141 aa)) constitute an SCP domain.

This sequence belongs to the CRISP family.

It localises to the secreted. In terms of biological role, putative serine protease inhibitor. In Mus musculus (Mouse), this protein is Peptidase inhibitor R3HDML (R3hdml).